Here is a 135-residue protein sequence, read N- to C-terminus: Large ribosomal subunit protein uL16c (135 aa).

The protein belongs to the universal ribosomal protein uL16 family. In terms of assembly, part of the 50S ribosomal subunit.

The protein localises to the plastid. It localises to the chloroplast. The protein is Large ribosomal subunit protein uL16c of Morus indica (Mulberry).